We begin with the raw amino-acid sequence, 412 residues long: CCA-adding enzyme (412 aa).

ATP is bound by residues S41 and K44. CTP contacts are provided by S41 and K44. Residues D53, D55, and D106 each coordinate Mg(2+). Residues H129, K149, and Y158 each coordinate ATP. Positions 129, 149, and 158 each coordinate CTP.

It belongs to the tRNA nucleotidyltransferase/poly(A) polymerase family. Archaeal CCA-adding enzyme subfamily. Homodimer. It depends on Mg(2+) as a cofactor.

It carries out the reaction a tRNA precursor + 2 CTP + ATP = a tRNA with a 3' CCA end + 3 diphosphate. The enzyme catalyses a tRNA with a 3' CCA end + 2 CTP + ATP = a tRNA with a 3' CCACCA end + 3 diphosphate. Its function is as follows. Catalyzes the addition and repair of the essential 3'-terminal CCA sequence in tRNAs without using a nucleic acid template. Adds these three nucleotides in the order of C, C, and A to the tRNA nucleotide-73, using CTP and ATP as substrates and producing inorganic pyrophosphate. tRNA 3'-terminal CCA addition is required both for tRNA processing and repair. Also involved in tRNA surveillance by mediating tandem CCA addition to generate a CCACCA at the 3' terminus of unstable tRNAs. While stable tRNAs receive only 3'-terminal CCA, unstable tRNAs are marked with CCACCA and rapidly degraded. The protein is CCA-adding enzyme of Saccharolobus solfataricus (strain ATCC 35092 / DSM 1617 / JCM 11322 / P2) (Sulfolobus solfataricus).